A 282-amino-acid chain; its full sequence is Acetylglutamate kinase (282 aa).

Residues 62–63 (GG), Arg84, and Asn178 each bind substrate. L-arginine is bound by residues Lys196, Ser214, and 266–269 (EIFS).

As to quaternary structure, homohexamer.

It localises to the cytoplasm. It catalyses the reaction N-acetyl-L-glutamate + ATP = N-acetyl-L-glutamyl 5-phosphate + ADP. Its pathway is amino-acid biosynthesis; L-arginine biosynthesis; N(2)-acetyl-L-ornithine from L-glutamate: step 2/4. Its activity is regulated as follows. Allosterically inhibited by arginine. Functionally, catalyzes the ATP-dependent phosphorylation of N-acetyl-L-glutamate. This chain is Acetylglutamate kinase, found in Thermotoga maritima (strain ATCC 43589 / DSM 3109 / JCM 10099 / NBRC 100826 / MSB8).